Reading from the N-terminus, the 197-residue chain is ATP-dependent Clp protease proteolytic subunit (197 aa).

The active-site Nucleophile is the serine 97. Histidine 122 is an active-site residue.

This sequence belongs to the peptidase S14 family. Fourteen ClpP subunits assemble into 2 heptameric rings which stack back to back to give a disk-like structure with a central cavity, resembling the structure of eukaryotic proteasomes.

It localises to the cytoplasm. It carries out the reaction Hydrolysis of proteins to small peptides in the presence of ATP and magnesium. alpha-casein is the usual test substrate. In the absence of ATP, only oligopeptides shorter than five residues are hydrolyzed (such as succinyl-Leu-Tyr-|-NHMec, and Leu-Tyr-Leu-|-Tyr-Trp, in which cleavage of the -Tyr-|-Leu- and -Tyr-|-Trp bonds also occurs).. Functionally, cleaves peptides in various proteins in a process that requires ATP hydrolysis. Has a chymotrypsin-like activity. Plays a major role in the degradation of misfolded proteins. The chain is ATP-dependent Clp protease proteolytic subunit from Trichlorobacter lovleyi (strain ATCC BAA-1151 / DSM 17278 / SZ) (Geobacter lovleyi).